The sequence spans 792 residues: Phenylalanine--tRNA ligase beta subunit (792 aa).

The tRNA-binding domain occupies 39 to 150; that stretch reads GDEITNVVTG…ENTPIGKDIK (112 aa). The region spanning 404–479 is the B5 domain; sequence SEPNIVEVDY…RIYGYNKVPS (76 aa). Positions 457, 463, 466, and 467 each coordinate Mg(2+). An FDX-ACB domain is found at 699–792; the sequence is PKFPTVTRDI…LEHVLGAELR (94 aa).

It belongs to the phenylalanyl-tRNA synthetase beta subunit family. Type 1 subfamily. In terms of assembly, tetramer of two alpha and two beta subunits. It depends on Mg(2+) as a cofactor.

It localises to the cytoplasm. The catalysed reaction is tRNA(Phe) + L-phenylalanine + ATP = L-phenylalanyl-tRNA(Phe) + AMP + diphosphate + H(+). The polypeptide is Phenylalanine--tRNA ligase beta subunit (Clostridium acetobutylicum (strain ATCC 824 / DSM 792 / JCM 1419 / IAM 19013 / LMG 5710 / NBRC 13948 / NRRL B-527 / VKM B-1787 / 2291 / W)).